The following is a 508-amino-acid chain: MLO-like protein 3 (508 aa).

The Extracellular segment spans residues 1-21 (MTDKEESNHSSEVGAVRSLQE). A helical transmembrane segment spans residues 22–42 (TPTWALATVCFFFIAVSICLE). Residues 43–68 (RLINLLSTRLKKNRKTSLLEAVEKLK) are Cytoplasmic-facing. The helical transmembrane segment at 69–89 (SVLMVLGFMSLMLNVTEGEVS) threads the bilayer. Residues 90–153 (KICIPIKYAN…SEEGLTQLSY (64 aa)) are Extracellular-facing. A helical membrane pass occupies residues 154-174 (FFFVLACMHILCNLAILLLGM). Residues 175 to 275 (AKMRKWNSWE…IQRSLHEDFK (101 aa)) lie on the Cytoplasmic side of the membrane. The helical transmembrane segment at 276–296 (TVVGISPLMWLTVVIFMLLDV) threads the bilayer. The Extracellular segment spans residues 297 to 304 (SGWRVYFY). The chain crosses the membrane as a helical span at residues 305–325 (MSFVPLIIVLVIGTKLEMIVA). At 326–357 (KMAVTIKENNSVIRGTPLVESNDTHFWFSNPR) the chain is on the cytoplasmic side. A helical transmembrane segment spans residues 358–378 (FLLSILHYTLFLNTFEMAFIV). At 379 to 401 (WITWQFGINSCYHDNQGIIITRL) the chain is on the extracellular side. The chain crosses the membrane as a helical span at residues 402-422 (VLAVTVQFLSSYITLPLYAIV). The Cytoplasmic portion of the chain corresponds to 423–508 (TQMGSSYKRA…EIQIQEKTER (86 aa)). Positions 436 to 457 (EQLANVLRHWQGMVRDKKKTIQ) are calmodulin-binding. The interval 453–492 (KKTIQTPDTDNNSNNNNGDIDSGESPVQTEVASEFRFSGR) is disordered. The residue at position 494 (Ser-494) is a Phosphoserine.

Belongs to the MLO family.

The protein resides in the membrane. Its function is as follows. May be involved in modulation of pathogen defense and leaf cell death. Activity seems to be regulated by Ca(2+)-dependent calmodulin binding and seems not to require heterotrimeric G proteins. The protein is MLO-like protein 3 (MLO3) of Arabidopsis thaliana (Mouse-ear cress).